We begin with the raw amino-acid sequence, 159 residues long: uncharacterized protein (159 aa).

The protein localises to the mitochondrion. This is an uncharacterized protein from Arabidopsis thaliana (Mouse-ear cress).